Reading from the N-terminus, the 982-residue chain is Pentatricopeptide repeat-containing protein At5g62370 (982 aa).

PPR repeat units lie at residues 94–129 (DSSCYGALIRKLTEMGQPGVAETFYNQRVIGNGIVP), 130–164 (DSSVLDSMVFCLVKLRRFDEARAHLDRIIASGYAP), 165–199 (SRNSSSLVVDELCNQDRFLEAFHCFEQVKERGSGL), 200–234 (WLWCCKRLFKGLCGHGHLNEAIGMLDTLCGMTRMP), 236–270 (PVNLYKSLFYCFCKRGCAAEAEALFDHMEVDGYYV), 271–305 (DKVMYTCLMKEYCKDNNMTMAMRLYLRMVERSFEL), 306–340 (DPCIFNTLIHGFMKLGMLDKGRVMFSQMIKKGVQS), 341–376 (NVFTYHIMIGSYCKEGNVDYALRLFVNNTGSEDISR), 377–411 (NVHCYTNLIFGFYKKGGMDKAVDLLMRMLDNGIVP), 412–446 (DHITYFVLLKMLPKCHELKYAMVILQSILDNGCGI), 476–510 (AAVGLAVVTTALCSQRNYIAALSRIEKMVNLGCTP), 511–545 (LPFSYNSVIKCLFQENIIEDLASLVNIIQELDFVP), 546–580 (DVDTYLIVVNELCKKNDRDAAFAIIDAMEELGLRP), 581–615 (TVAIYSSIIGSLGKQGRVVEAEETFAKMLESGIQP), 616–650 (DEIAYMIMINTYARNGRIDEANELVEEVVKHFLRP), 651–685 (SSFTYTVLISGFVKMGMMEKGCQYLDKMLEDGLSP), 686–720 (NVVLYTALIGHFLKKGDFKFSFTLFGLMGENDIKH), 721–755 (DHIAYITLLSGLWRAMARKKKRQVIVEPGKEKLLQ), 759–789 (RTKPLVSIPSSLGNYGSKSFAMEVIGKVKKS), 793–827 (NLYLHNTIITGYCAAGRLDEAYNHLESMQKEGIVP), 828–858 (NLVTYTILMKSHIEAGDIESAIDLFEGTNCE), 860–894 (DQVMYSTLLKGLCDFKRPLDALALMLEMQKSGINP), 895–929 (NKDSYEKLLQCLCYSRLTMEAVKVVKDMAALDIWP), and 930–964 (RSINHTWLIYILCEEKKLREARALFAIMVQSGRSL).

The protein belongs to the PPR family. P subfamily.

This chain is Pentatricopeptide repeat-containing protein At5g62370, found in Arabidopsis thaliana (Mouse-ear cress).